Consider the following 1377-residue polypeptide: Zinc finger MYM-type protein 2 (1377 aa).

Residues Lys48, Lys88, Lys98, and Lys104 each participate in a glycyl lysine isopeptide (Lys-Gly) (interchain with G-Cter in SUMO2) cross-link. Composition is skewed to polar residues over residues 85-115 and 127-138; these read TSSK…SVSE and TNQGQEKNSSNF. Residues 85–177 form a disordered region; the sequence is TSSKNEELQG…GMGNSGITTE (93 aa). A compositionally biased stretch (basic and acidic residues) spans 139–152; sequence IERRPPETKNRTND. A Glycyl lysine isopeptide (Lys-Gly) (interchain with G-Cter in SUMO2) cross-link involves residue Lys147. The span at 153–164 shows a compositional bias: polar residues; that stretch reads VDFSTSSFSRSK. The residue at position 159 (Ser159) is a Phosphoserine. Glycyl lysine isopeptide (Lys-Gly) (interchain with G-Cter in SUMO2) cross-links involve residues Lys253 and Lys297. Positions 273 to 305 are disordered; the sequence is NGESATHHNPDSWISQSASFPRNQKQPGVDSLS. A compositionally biased stretch (polar residues) spans 284–298; the sequence is SWISQSASFPRNQKQ. Ser305 carries the post-translational modification Phosphoserine. Residues Lys312, Lys325, Lys348, and Lys366 each participate in a glycyl lysine isopeptide (Lys-Gly) (interchain with G-Cter in SUMO2) cross-link. An MYM-type 1 zinc finger spans residues 327–363; sequence VKVTCANCKKPLQKGQTAYQRKGSAHLFCSTTCLSSF. The MYM-type 2 zinc finger occupies 369–409; sequence PKKLCVMCKKDITTMKGTIVAQVDSSESFQEFCSTSCLSLY. Residues Lys417, Lys441, Lys491, Lys503, Lys513, Lys529, and Lys532 each participate in a glycyl lysine isopeptide (Lys-Gly) (interchain with G-Cter in SUMO2) cross-link. 2 MYM-type zinc fingers span residues 421-456 and 463-502; these read NKSR…FNRY and IMNC…VSEY. Residues 533–570 form an MYM-type 5 zinc finger; that stretch reads LTTCTGCRTQCRFFDMTQCIGPNGYMEPYCSTACMNSH. Glycyl lysine isopeptide (Lys-Gly) (interchain with G-Cter in SUMO2) cross-links involve residues Lys576, Lys603, Lys649, Lys658, Lys688, Lys700, and Lys709. The MYM-type 6 zinc finger occupies 636–671; the sequence is QLKCNYCKNSFCSKPEILEWENKVHQFCSKTCSDDY. MYM-type zinc fingers lie at residues 723-758 and 764-799; these read RCVT…CKKF and KAAR…LLRF. Residues Lys764, Lys788, Lys812, and Lys829 each participate in a glycyl lysine isopeptide (Lys-Gly) (interchain with G-Cter in SUMO2) cross-link. 2 positions are modified to phosphoserine: Ser838 and Ser958. 2 disordered regions span residues 983-1002 and 1028-1064; these read LLKN…PYEP and VFGE…SDNS. Basic residues predominate over residues 1039-1050; the sequence is PRSKKKGAKRKA. Ser1064 carries the phosphoserine modification. Thr1376 bears the Phosphothreonine mark.

Can form homodimers. May be a component of a BHC histone deacetylase complex that contains HDAC1, HDAC2, HMG20B/BRAF35, KDM1A, RCOR1/CoREST, PHF21A/BHC80, ZMYM2, ZNF217, ZMYM3, GSE1 and GTF2I. Interacts with FOXP1 and FOXP2.

It localises to the nucleus. Involved in the negative regulation of transcription. The chain is Zinc finger MYM-type protein 2 (ZMYM2) from Homo sapiens (Human).